A 291-amino-acid chain; its full sequence is 33 kDa chaperonin (291 aa).

Disulfide bonds link C237–C239 and C270–C273.

It belongs to the HSP33 family. Under oxidizing conditions two disulfide bonds are formed involving the reactive cysteines. Under reducing conditions zinc is bound to the reactive cysteines and the protein is inactive.

Its subcellular location is the cytoplasm. Functionally, redox regulated molecular chaperone. Protects both thermally unfolding and oxidatively damaged proteins from irreversible aggregation. Plays an important role in the bacterial defense system toward oxidative stress. The polypeptide is 33 kDa chaperonin (Bacillus anthracis (strain A0248)).